A 619-amino-acid polypeptide reads, in one-letter code: Probable serine/threonine-protein kinase WNK8 (619 aa).

Over residues M1–R14 the composition is skewed to basic and acidic residues. Positions M1 to P30 are disordered. The Protein kinase domain occupies G35–L291. Residues T115–F118 and K163 each bind ATP. D180 serves as the catalytic Proton acceptor. Disordered regions lie at residues P293–T335, Y419–H464, C508–D555, and G585–F619. Over residues Y419–V428 the composition is skewed to acidic residues. Residues S439–S448 are compositionally biased toward low complexity. Positions Q602–F619 are enriched in basic residues.

This sequence belongs to the protein kinase superfamily. Ser/Thr protein kinase family. WNK subfamily.

The catalysed reaction is L-seryl-[protein] + ATP = O-phospho-L-seryl-[protein] + ADP + H(+). It carries out the reaction L-threonyl-[protein] + ATP = O-phospho-L-threonyl-[protein] + ADP + H(+). This chain is Probable serine/threonine-protein kinase WNK8 (WNK8), found in Oryza sativa subsp. japonica (Rice).